We begin with the raw amino-acid sequence, 580 residues long: Xylulose kinase (580 aa).

Substrate-binding residues include histidine 99, arginine 170, aspartate 280, and asparagine 281. ATP-binding positions include tryptophan 355, 441–442, and asparagine 445; that span reads GA.

This sequence belongs to the FGGY kinase family. As to quaternary structure, monomer.

The enzyme catalyses D-xylulose + ATP = D-xylulose 5-phosphate + ADP + H(+). Phosphorylates D-xylulose to produce D-xylulose 5-phosphate, a molecule that may play an important role in the regulation of glucose metabolism and lipogenesis. The protein is Xylulose kinase (XYLB) of Pongo abelii (Sumatran orangutan).